Consider the following 61-residue polypeptide: Small ribosomal subunit protein uS14 (61 aa).

Zn(2+) contacts are provided by Cys-24, Cys-27, Cys-40, and Cys-43.

It belongs to the universal ribosomal protein uS14 family. Zinc-binding uS14 subfamily. In terms of assembly, part of the 30S ribosomal subunit. Contacts proteins S3 and S10. Zn(2+) serves as cofactor.

Its function is as follows. Binds 16S rRNA, required for the assembly of 30S particles and may also be responsible for determining the conformation of the 16S rRNA at the A site. The polypeptide is Small ribosomal subunit protein uS14 (Nitratiruptor sp. (strain SB155-2)).